The chain runs to 331 residues: Hyaluronidase (331 aa).

2 disulfide bridges follow: Cys19-Cys308 and Cys185-Cys197. An N-linked (GlcNAc...) asparagine glycan is attached at Asn79. The active-site Proton donor is the Glu109. N-linked (GlcNAc...) asparagine glycosylation occurs at Asn325.

Belongs to the glycosyl hydrolase 56 family. As to expression, expressed by the venom gland.

It localises to the secreted. The enzyme catalyses Random hydrolysis of (1-&gt;4)-linkages between N-acetyl-beta-D-glucosamine and D-glucuronate residues in hyaluronate.. In terms of biological role, hydrolyzes high molecular weight hyaluronic acid to produce small oligosaccharides. The sequence is that of Hyaluronidase from Dolichovespula maculata (Bald-faced hornet).